Here is a 306-residue protein sequence, read N- to C-terminus: tRNA dimethylallyltransferase (306 aa).

11–18 is an ATP binding site; it reads GPTAVGKS. Position 13-18 (13-18) interacts with substrate; sequence TAVGKS. The interaction with substrate tRNA stretch occupies residues 35 to 38; that stretch reads DSIQ.

Belongs to the IPP transferase family. In terms of assembly, monomer. Mg(2+) serves as cofactor.

It catalyses the reaction adenosine(37) in tRNA + dimethylallyl diphosphate = N(6)-dimethylallyladenosine(37) in tRNA + diphosphate. In terms of biological role, catalyzes the transfer of a dimethylallyl group onto the adenine at position 37 in tRNAs that read codons beginning with uridine, leading to the formation of N6-(dimethylallyl)adenosine (i(6)A). In Borreliella burgdorferi (strain ATCC 35210 / DSM 4680 / CIP 102532 / B31) (Borrelia burgdorferi), this protein is tRNA dimethylallyltransferase.